Here is a 263-residue protein sequence, read N- to C-terminus: Taurine import ATP-binding protein TauB (263 aa).

One can recognise an ABC transporter domain in the interval 4 to 235 (LTAEAISLSF…RYAAGETVRS (232 aa)). 40 to 47 (GPSGCGKS) serves as a coordination point for ATP.

This sequence belongs to the ABC transporter superfamily. Taurine importer (TC 3.A.1.17.1) family. As to quaternary structure, the complex is composed of two ATP-binding proteins (TauB), two transmembrane proteins (TauC) and a solute-binding protein (TauA).

The protein resides in the cell inner membrane. The catalysed reaction is taurine(out) + ATP + H2O = taurine(in) + ADP + phosphate + H(+). Part of the ABC transporter complex TauABC involved in taurine import. Responsible for energy coupling to the transport system. The protein is Taurine import ATP-binding protein TauB of Pseudomonas aeruginosa (strain ATCC 15692 / DSM 22644 / CIP 104116 / JCM 14847 / LMG 12228 / 1C / PRS 101 / PAO1).